The following is a 159-amino-acid chain: Serine-protein kinase RsbW (159 aa).

The protein belongs to the anti-sigma-factor family.

The enzyme catalyses L-seryl-[protein] + ATP = O-phospho-L-seryl-[protein] + ADP + H(+). The catalysed reaction is L-threonyl-[protein] + ATP = O-phospho-L-threonyl-[protein] + ADP + H(+). Negative regulator of sigma-B activity. Phosphorylates and inactivates its specific antagonist protein, RsbV. Upon phosphorylation of RsbV, RsbW is released and binds to sigma-B, thereby blocking its ability to form an RNA polymerase holoenzyme (E-sigma-B). The polypeptide is Serine-protein kinase RsbW (Staphylococcus epidermidis).